We begin with the raw amino-acid sequence, 201 residues long: MPVPIVIETSGRSERAYDIYSRLLKDRIILLGTPIDDQVASLICAQLLFLESENPEKEIYLYINSPGGSVTAGMAIYDTMQYITSPVATLCLGQAASMGALLLAAGAPGMRHALPNSRIMIHQPSGGFHGQASDIDIHAREVLRMKANLNEIMARHTGQPVERVADDTERDYFMGPAEAKEYGIIDSILTSRRDATQNQAK.

Ser-97 (nucleophile) is an active-site residue. His-122 is a catalytic residue.

This sequence belongs to the peptidase S14 family. In terms of assembly, fourteen ClpP subunits assemble into 2 heptameric rings which stack back to back to give a disk-like structure with a central cavity, resembling the structure of eukaryotic proteasomes.

The protein localises to the cytoplasm. It catalyses the reaction Hydrolysis of proteins to small peptides in the presence of ATP and magnesium. alpha-casein is the usual test substrate. In the absence of ATP, only oligopeptides shorter than five residues are hydrolyzed (such as succinyl-Leu-Tyr-|-NHMec, and Leu-Tyr-Leu-|-Tyr-Trp, in which cleavage of the -Tyr-|-Leu- and -Tyr-|-Trp bonds also occurs).. Its function is as follows. Cleaves peptides in various proteins in a process that requires ATP hydrolysis. Has a chymotrypsin-like activity. Plays a major role in the degradation of misfolded proteins. The protein is ATP-dependent Clp protease proteolytic subunit of Nitratidesulfovibrio vulgaris (strain DSM 19637 / Miyazaki F) (Desulfovibrio vulgaris).